Reading from the N-terminus, the 122-residue chain is Large ribosomal subunit protein uL14 (122 aa).

This sequence belongs to the universal ribosomal protein uL14 family. As to quaternary structure, part of the 50S ribosomal subunit. Forms a cluster with proteins L3 and L19. In the 70S ribosome, L14 and L19 interact and together make contacts with the 16S rRNA in bridges B5 and B8.

In terms of biological role, binds to 23S rRNA. Forms part of two intersubunit bridges in the 70S ribosome. The sequence is that of Large ribosomal subunit protein uL14 from Shewanella frigidimarina (strain NCIMB 400).